Here is a 262-residue protein sequence, read N- to C-terminus: Type II restriction enzyme HinfI (262 aa).

It catalyses the reaction Endonucleolytic cleavage of DNA to give specific double-stranded fragments with terminal 5'-phosphates.. A P subtype restriction enzyme that recognizes the double-stranded sequence 5'-GANTC-3' and cleaves after G-1. The polypeptide is Type II restriction enzyme HinfI (hinfIR) (Haemophilus influenzae).